We begin with the raw amino-acid sequence, 127 residues long: Large ribosomal subunit protein bL17 (127 aa).

It belongs to the bacterial ribosomal protein bL17 family. Part of the 50S ribosomal subunit. Contacts protein L32.

The protein is Large ribosomal subunit protein bL17 of Alcanivorax borkumensis (strain ATCC 700651 / DSM 11573 / NCIMB 13689 / SK2).